The chain runs to 447 residues: Serine/threonine-protein phosphatase 2A 55 kDa regulatory subunit B alpha isoform (447 aa).

Residue Ala2 is modified to N-acetylalanine. 7 WD repeats span residues 11 to 80, 94 to 174, 175 to 218, 227 to 270, 288 to 325, 347 to 381, and 414 to 446; these read QWCF…FQSH, EKIN…IFAN, AHTY…VDIK, EVIT…KLFE, ISDV…TYQV, ECCW…TLEA, and DFNK…QDKV.

The protein belongs to the phosphatase 2A regulatory subunit B family. In terms of assembly, PP2A consists of a common heterodimeric core enzyme, composed of a 36 kDa catalytic subunit (subunit C) and a 65 kDa constant regulatory subunit (PR65 or subunit A), that associates with a variety of regulatory subunits. Proteins that associate with the core dimer include three families of regulatory subunits B (the R2/B/PR55/B55, R3/B''/PR72/PR130/PR59 and R5/B'/B56 families), the 48 kDa variable regulatory subunit, viral proteins, and cell signaling molecules. Interacts with the PP2A C catalytic subunit PPP2CA. Interacts with the PP2A A subunit PPP2R1A. Found in a complex with at least ARL2, PPP2CB, PPP2R1A, PPP2R2A, PPP2R5E and TBCD. Interacts with MFHAS1; the interaction is direct. Interacts with PABIR1/FAM122A (via its N-terminus); the interaction is direct and inhibits PP2A activity. Interacts with ARPP19; the interaction is direct and inhibits PP2A activity. Interacts with CRTC3. Brain.

In terms of biological role, substrate-recognition subunit of protein phosphatase 2A (PP2A) that plays a key role in cell cycle by controlling mitosis entry and exit. Involved in chromosome clustering during late mitosis by mediating dephosphorylation of MKI67. Essential for serine/threonine-protein phosphatase 2A-mediated dephosphorylation of WEE1, preventing its ubiquitin-mediated proteolysis, increasing WEE1 protein levels, and promoting the G2/M checkpoint. The protein is Serine/threonine-protein phosphatase 2A 55 kDa regulatory subunit B alpha isoform (Ppp2r2a) of Rattus norvegicus (Rat).